Consider the following 173-residue polypeptide: Photosystem I assembly protein Ycf3 (173 aa).

TPR repeat units lie at residues 36 to 69 (AFAY…EQDD), 73 to 106 (SYIL…NPRL), and 121 to 154 (GEQS…APNN).

It belongs to the Ycf3 family.

It is found in the cellular thylakoid membrane. Functionally, essential for the assembly of the photosystem I (PSI) complex. May act as a chaperone-like factor to guide the assembly of the PSI subunits. The polypeptide is Photosystem I assembly protein Ycf3 (Synechococcus sp. (strain JA-3-3Ab) (Cyanobacteria bacterium Yellowstone A-Prime)).